Here is a 354-residue protein sequence, read N- to C-terminus: Rhodopsin (354 aa).

Topologically, residues 1–36 are extracellular; sequence MNGTEGPNFYIPMSNKTGVVRSPFEYPQYYLAEPWQ. 2 N-linked (GlcNAc...) asparagine glycosylation sites follow: N2 and N15. The chain crosses the membrane as a helical span at residues 37–61; that stretch reads YSILCAYMFLLILLGFPINFMTLYV. At 62 to 73 the chain is on the cytoplasmic side; that stretch reads TIQHKKLRTPLN. A helical membrane pass occupies residues 74–96; it reads YILLNLAFANHFMVLCGFTVTMY. Topologically, residues 97–110 are extracellular; the sequence is SSMNGYFILGATGC. Residues C110 and C187 are joined by a disulfide bond. A helical membrane pass occupies residues 111 to 133; the sequence is YVEGFFATLGGEIALWSLVVLAI. The 'Ionic lock' involved in activated form stabilization signature appears at 134-136; that stretch reads ERY. The Cytoplasmic segment spans residues 134–152; the sequence is ERYVVVCKPMSNFRFSENH. The chain crosses the membrane as a helical span at residues 153-173; that stretch reads AVMGVAFTWIMALSCAVPPLL. The Extracellular segment spans residues 174-202; the sequence is GWSRYIPEGMQCSCGVDYYTLKPEVNNES. A helical transmembrane segment spans residues 203-224; sequence FVIYMFVVHFTIPLIIIFFCYG. Over 225 to 252 the chain is Cytoplasmic; the sequence is RLVCTVKEAAAQQQESATTQKAEKEVTR. The chain crosses the membrane as a helical span at residues 253-274; that stretch reads MVIIMVVFFLICWVPYASVAFF. Over 275-286 the chain is Extracellular; that stretch reads IFSNQGSEFGPI. The chain crosses the membrane as a helical span at residues 287–308; that stretch reads FMTVPAFFAKSSSIYNPVIYIM. Residue K296 is modified to N6-(retinylidene)lysine. Over 309–354 the chain is Cytoplasmic; the sequence is LNKQFRNCMITTLCCGKNPFGEDDASSAATSKTEASSVSSSQVSPA. Residues C322 and C323 are each lipidated (S-palmitoyl cysteine). The segment at 331 to 354 is disordered; sequence DDASSAATSKTEASSVSSSQVSPA. The segment covering 334-354 has biased composition (low complexity); the sequence is SSAATSKTEASSVSSSQVSPA.

It belongs to the G-protein coupled receptor 1 family. Opsin subfamily. Post-translationally, contains one covalently linked retinal chromophore. Upon light absorption, the covalently bound 11-cis-retinal is converted to all-trans-retinal. After hydrolysis of the Schiff base and release of the covalently bound all-trans-retinal, active rhodopsin is regenerated by binding of a fresh molecule of 11-cis-retinal.

It is found in the membrane. The protein localises to the cell projection. The protein resides in the cilium. Its subcellular location is the photoreceptor outer segment. Its function is as follows. Photoreceptor required for image-forming vision at low light intensity. Required for photoreceptor cell viability after birth. Light-induced isomerization of 11-cis to all-trans retinal triggers a conformational change that activates signaling via G-proteins. Subsequent receptor phosphorylation mediates displacement of the bound G-protein alpha subunit by arrestin and terminates signaling. This is Rhodopsin (RHO) from Bufo bufo (European toad).